The following is a 269-amino-acid chain: Type II methyltransferase M2.LlaDCHI (269 aa).

It belongs to the N(4)/N(6)-methyltransferase family.

It carries out the reaction a 2'-deoxyadenosine in DNA + S-adenosyl-L-methionine = an N(6)-methyl-2'-deoxyadenosine in DNA + S-adenosyl-L-homocysteine + H(+). Its function is as follows. A beta subtype methylase, recognizes the double-stranded sequence 5'-GATC-3', methylates A-2 on both strands, and protects the DNA from cleavage by the LlaDCHI endonuclease. This is Type II methyltransferase M2.LlaDCHI from Lactococcus lactis subsp. cremoris (Streptococcus cremoris).